Reading from the N-terminus, the 70-residue chain is Cold shock-like protein CspI (70 aa).

Residues 7–67 (GLVKWFNPEK…GPKGPAAVHV (61 aa)) enclose the CSD domain.

It is found in the cytoplasm. The sequence is that of Cold shock-like protein CspI (cspI) from Escherichia coli O6:H1 (strain CFT073 / ATCC 700928 / UPEC).